The following is a 224-amino-acid chain: Ribose-5-phosphate isomerase A (224 aa).

Residues 32–35 (TGST), 85–88 (DGAD), and 98–101 (KGGG) each bind substrate. Glu-107 acts as the Proton acceptor in catalysis. Lys-125 lines the substrate pocket.

The protein belongs to the ribose 5-phosphate isomerase family. In terms of assembly, homodimer.

The catalysed reaction is aldehydo-D-ribose 5-phosphate = D-ribulose 5-phosphate. The protein operates within carbohydrate degradation; pentose phosphate pathway; D-ribose 5-phosphate from D-ribulose 5-phosphate (non-oxidative stage): step 1/1. In terms of biological role, catalyzes the reversible conversion of ribose-5-phosphate to ribulose 5-phosphate. The polypeptide is Ribose-5-phosphate isomerase A (Pseudomonas putida (strain W619)).